The chain runs to 364 residues: Chorismate synthase (364 aa).

R47 contributes to the NADP(+) binding site. Residues 124–126 (RAS), G287, 302–306 (KPTAT), and R328 each bind FMN.

The protein belongs to the chorismate synthase family. As to quaternary structure, homotetramer. Requires FMNH2 as cofactor.

The enzyme catalyses 5-O-(1-carboxyvinyl)-3-phosphoshikimate = chorismate + phosphate. Its pathway is metabolic intermediate biosynthesis; chorismate biosynthesis; chorismate from D-erythrose 4-phosphate and phosphoenolpyruvate: step 7/7. Catalyzes the anti-1,4-elimination of the C-3 phosphate and the C-6 proR hydrogen from 5-enolpyruvylshikimate-3-phosphate (EPSP) to yield chorismate, which is the branch point compound that serves as the starting substrate for the three terminal pathways of aromatic amino acid biosynthesis. This reaction introduces a second double bond into the aromatic ring system. This is Chorismate synthase from Prochlorococcus marinus (strain MIT 9515).